The following is a 438-amino-acid chain: Protein ROOT INITIATION DEFECTIVE 3 (438 aa).

WD repeat units lie at residues 36 to 74, 76 to 115, 118 to 157, 171 to 212, 214 to 253, and 261 to 300; these read AHGL…AEVK, YPVE…LLKK, GHYR…DDFQ, EHTM…LLKN, IFPS…EYGT, and EKGK…HVRT. Positions 394-434 form a coiled coil; that stretch reads AATEMEMERLKLEYKRSLQMNEQWQKNYENLLQVVMEEEQI.

Functionally, involved in meristem development. Acts as a negative regulator of the CUC-STM pathway in shoot apical meristem (SAM) neo-formation. The protein is Protein ROOT INITIATION DEFECTIVE 3 (RID3) of Arabidopsis thaliana (Mouse-ear cress).